A 414-amino-acid polypeptide reads, in one-letter code: Light-independent protochlorophyllide reductase subunit N (414 aa).

[4Fe-4S] cluster contacts are provided by Cys16, Cys41, and Cys98.

The protein belongs to the BchN/ChlN family. In terms of assembly, protochlorophyllide reductase is composed of three subunits; BchL, BchN and BchB. Forms a heterotetramer of two BchB and two BchN subunits. Requires [4Fe-4S] cluster as cofactor.

The enzyme catalyses chlorophyllide a + oxidized 2[4Fe-4S]-[ferredoxin] + 2 ADP + 2 phosphate = protochlorophyllide a + reduced 2[4Fe-4S]-[ferredoxin] + 2 ATP + 2 H2O. Its pathway is porphyrin-containing compound metabolism; bacteriochlorophyll biosynthesis (light-independent). Component of the dark-operative protochlorophyllide reductase (DPOR) that uses Mg-ATP and reduced ferredoxin to reduce ring D of protochlorophyllide (Pchlide) to form chlorophyllide a (Chlide). This reaction is light-independent. The NB-protein (BchN-BchB) is the catalytic component of the complex. The protein is Light-independent protochlorophyllide reductase subunit N of Roseiflexus castenholzii (strain DSM 13941 / HLO8).